A 453-amino-acid polypeptide reads, in one-letter code: Na(+)/H(+) antiporter NhaA (453 aa).

The next 12 membrane-spanning stretches (helical) occupy residues 27–47 (FLHIEALSGVVLLLAAAAALM), 78–98 (LHFWVNDALMAVFFLVAGMEI), 114–134 (ILPIVAAIGGVCLPAIIYFSF), 143–163 (GWAVPTATDIAFALGILALLG), 172–192 (IILLSLAIIDDIIAVLIIAFF), 201–221 (GLVIAIAGIALVLFFQWIGFA), 222–242 (SAWLYILPGAIIWWGLMVTGI), 249–269 (VILGMMTPVLPTRTLIAPLTI), 316–336 (PWVAYGVMPIFAFANAGVSFA), 346–366 (FLIVLGVVIGLFIGKPLGIIT), 385–405 (WAGILLIGFLAGIGFTMSIFV), and 421–441 (IGVLCGSGLSALIGLGYGLIY).

The protein belongs to the NhaA Na(+)/H(+) (TC 2.A.33) antiporter family.

It localises to the cell inner membrane. The enzyme catalyses Na(+)(in) + 2 H(+)(out) = Na(+)(out) + 2 H(+)(in). Na(+)/H(+) antiporter that extrudes sodium in exchange for external protons. In Bartonella henselae (strain ATCC 49882 / DSM 28221 / CCUG 30454 / Houston 1) (Rochalimaea henselae), this protein is Na(+)/H(+) antiporter NhaA.